The sequence spans 321 residues: Phosphate acyltransferase (321 aa).

This sequence belongs to the PlsX family. As to quaternary structure, homodimer. Probably interacts with PlsY.

Its subcellular location is the cytoplasm. The enzyme catalyses a fatty acyl-[ACP] + phosphate = an acyl phosphate + holo-[ACP]. It functions in the pathway lipid metabolism; phospholipid metabolism. In terms of biological role, catalyzes the reversible formation of acyl-phosphate (acyl-PO(4)) from acyl-[acyl-carrier-protein] (acyl-ACP). This enzyme utilizes acyl-ACP as fatty acyl donor, but not acyl-CoA. The chain is Phosphate acyltransferase from Chlamydia trachomatis serovar L2 (strain ATCC VR-902B / DSM 19102 / 434/Bu).